The chain runs to 238 residues: MRFDIVTLFPDCFNSVLNSGLLGKALAKQIAEVHLVNPRDFTTDKHRKVDDEPYGGGVGMLMKPEPIFTAVESLPVLPRREIILMSPQGQTINQSLLKELVTNYDQLVVICGHYEGVDERVLHLVTREVSLGDFILTGGEIPAMALINGVVRLIPGTVAKTESLTAESFEEGLLDYPQYTRPANFRGLKVPDVLLSGNHAAIAQWRYEQQIQKTRDRRPDLLEKLEQGKQGSRGAGGE.

S-adenosyl-L-methionine contacts are provided by residues Gly112 and Leu131 to Leu136.

The protein belongs to the RNA methyltransferase TrmD family. In terms of assembly, homodimer.

It localises to the cytoplasm. The enzyme catalyses guanosine(37) in tRNA + S-adenosyl-L-methionine = N(1)-methylguanosine(37) in tRNA + S-adenosyl-L-homocysteine + H(+). Its function is as follows. Specifically methylates guanosine-37 in various tRNAs. The protein is tRNA (guanine-N(1)-)-methyltransferase of Nostoc punctiforme (strain ATCC 29133 / PCC 73102).